Consider the following 123-residue polypeptide: MRSLLVLLALAACASAQFFIRGGDDDNGFFGDDDNGYYYPRYFPIYNRFPIYRPIYYRPQIYYPIYRPIFGYGGYGYGGYGGYGYGGYGYGGYGYGGYGGYGYNPYSYGGFYRFGDDDNGFDD.

The N-terminal stretch at 1-16 (MRSLLVLLALAACASA) is a signal peptide.

Prismatic layer of shell (at protein level). Expressed primarily in the mantle with highest level in the mantle edge and lower level in the mantle pallium.

It localises to the secreted. Functionally, may be involved in calcification of the prismatic layer of the shell. In Margaritifera margaritifera (Freshwater pearl mussel), this protein is Prismalin-14.